A 209-amino-acid polypeptide reads, in one-letter code: Transmembrane protein 52 (209 aa).

The N-terminal stretch at 1 to 32 (MARGPLAARGLRLLLPLLPLLPLLPLPQVALG) is a signal peptide. Residues 56–76 (VGLILLAVLLLLLCGVTAGCV) form a helical membrane-spanning segment. The segment at 145 to 209 (AYSLYTPEPP…QLPPCSPGAP (65 aa)) is disordered. A compositionally biased stretch (basic and acidic residues) spans 159–170 (EAVKMAKPREEG). Residues 186–202 (LETTPVPQESGPNTQLP) show a composition bias toward polar residues.

It is found in the membrane. The polypeptide is Transmembrane protein 52 (TMEM52) (Homo sapiens (Human)).